Consider the following 310-residue polypeptide: Carbamate kinase 1 (310 aa).

Belongs to the carbamate kinase family.

It is found in the cytoplasm. It carries out the reaction hydrogencarbonate + NH4(+) + ATP = carbamoyl phosphate + ADP + H2O + H(+). It participates in metabolic intermediate metabolism; carbamoyl phosphate degradation; CO(2) and NH(3) from carbamoyl phosphate: step 1/1. This is Carbamate kinase 1 (arcC1) from Staphylococcus epidermidis (strain ATCC 12228 / FDA PCI 1200).